A 1002-amino-acid chain; its full sequence is Lon protease homolog, mitochondrial (1002 aa).

One can recognise a Lon N-terminal domain in the interval 102-313; it reads VIALPLPHRP…LTLELVKKEM (212 aa). An ATP-binding site is contributed by 468–475; sequence GPPGVGKT. Residues 811–995 form the Lon proteolytic domain; it reads QTPVGVVMGL…NEIFDIAFQS (185 aa). Residues Ser-901 and Lys-944 contribute to the active site.

Belongs to the peptidase S16 family. In terms of assembly, homohexamer or homoheptamer. Organized in a ring with a central cavity.

The protein resides in the mitochondrion matrix. The enzyme catalyses Hydrolysis of proteins in presence of ATP.. Its function is as follows. ATP-dependent serine protease that mediates the selective degradation of misfolded, unassembled or oxidatively damaged polypeptides as well as certain short-lived regulatory proteins in the mitochondrial matrix. May also have a chaperone function in the assembly of inner membrane protein complexes. Participates in the regulation of mitochondrial gene expression and in the maintenance of the integrity of the mitochondrial genome. Binds to mitochondrial DNA in a site-specific manner. This is Lon protease homolog, mitochondrial from Oryza sativa subsp. japonica (Rice).